The primary structure comprises 449 residues: Cytochrome P450 monooxygenase iliC (449 aa).

Residues 28 to 44 traverse the membrane as a helical segment; the sequence is TFAITFMGVKQICTIEG. C397 contacts heme.

Belongs to the cytochrome P450 family. The cofactor is heme.

It is found in the membrane. It catalyses the reaction (3E,5S)-3-[(2E,4E,8S,10E,12Z)-1-hydroxy-4,8-dimethyltetradeca-2,4,10,12-tetraen-1-ylidene]-5-[(4-hydroxyphenyl)methyl]pyrrolidine-2,4-dione + reduced [NADPH--hemoprotein reductase] + O2 = 3-[(2E,4E,8S,10E,12Z)-4,8-dimethyltetradeca-2,4,10,12-tetraenoyl]-4-hydroxy-5-(4-hydroxyphenyl)-1,2-dihydropyridin-2-one + oxidized [NADPH--hemoprotein reductase] + 2 H2O. It functions in the pathway mycotoxin biosynthesis. In terms of biological role, cytochrome P450 monooxygenase; part of the gene cluster that mediates the biosynthesis of ilicicolin H, a 4-hydroxy-2-pyridonealkaloid that has potent and broad antifungal activities by inhibiting the mitochondrial respiration chain. IliC catalyzes the ring expansion of the tetramate intermediate to the acyclic 2-pyridone intermediate that contains the trans bis-diene chain. The biosynthesis of ilicicolin H starts with formation of the tetramic acid by the hybrid PKS-NRPS synthetase iliA with the partnering trans-enoyl reductase iliB since iliA lacks a designated enoylreductase (ER) domain. The cytochrome P450 monooxygenase iliC then catalyzes the ring expansion of the tetramate to the acyclic 2-pyridone. The pericyclase iliD further converts the acyclic 2-pyridone into 8-epi-ilicicolin H. 8-epi-ilicicolin H might then spontaneously convert to ilicicolin H since ilicicolin H is produced in the absence of the epimerase iliE, in contrast to what was observed for the Talaromyces variabilis ilicolin H biosynthetic pathway. The protein is Cytochrome P450 monooxygenase iliC of Hypocrea jecorina (strain QM6a) (Trichoderma reesei).